We begin with the raw amino-acid sequence, 237 residues long: Phosphoribosylaminoimidazole-succinocarboxamide synthase (237 aa).

This sequence belongs to the SAICAR synthetase family.

The enzyme catalyses 5-amino-1-(5-phospho-D-ribosyl)imidazole-4-carboxylate + L-aspartate + ATP = (2S)-2-[5-amino-1-(5-phospho-beta-D-ribosyl)imidazole-4-carboxamido]succinate + ADP + phosphate + 2 H(+). It participates in purine metabolism; IMP biosynthesis via de novo pathway; 5-amino-1-(5-phospho-D-ribosyl)imidazole-4-carboxamide from 5-amino-1-(5-phospho-D-ribosyl)imidazole-4-carboxylate: step 1/2. The polypeptide is Phosphoribosylaminoimidazole-succinocarboxamide synthase (Baumannia cicadellinicola subsp. Homalodisca coagulata).